The chain runs to 65 residues: MKAADVRSKSVDQLSDELVKLKKEQFNLRFQAATGQLEKTGRVTEVRRDIARVKTILREKSQAGK.

Belongs to the universal ribosomal protein uL29 family.

This Hyphomonas neptunium (strain ATCC 15444) protein is Large ribosomal subunit protein uL29.